Here is a 324-residue protein sequence, read N- to C-terminus: NADH-ubiquinone oxidoreductase chain 1 (324 aa).

Helical transmembrane passes span 3 to 23 (LLFM…AVAF), 73 to 93 (LLFI…WTPF), 106 to 126 (ILFI…SGWA), 151 to 171 (ALII…AFAI), 175 to 195 (FTWF…STLA), 226 to 246 (LFFL…TIIF), 255 to 275 (TLTT…FLWV), and 295 to 315 (FLPL…SLLF).

It belongs to the complex I subunit 1 family.

It is found in the mitochondrion inner membrane. The enzyme catalyses a ubiquinone + NADH + 5 H(+)(in) = a ubiquinol + NAD(+) + 4 H(+)(out). In terms of biological role, core subunit of the mitochondrial membrane respiratory chain NADH dehydrogenase (Complex I) that is believed to belong to the minimal assembly required for catalysis. Complex I functions in the transfer of electrons from NADH to the respiratory chain. The immediate electron acceptor for the enzyme is believed to be ubiquinone. This chain is NADH-ubiquinone oxidoreductase chain 1 (MT-ND1), found in Aquarana catesbeiana (American bullfrog).